The chain runs to 377 residues: RING-H2 finger protein ATL22 (377 aa).

Positions 1-23 (MTSKLLPLLLNLIFLFFFPLLNA) are cleaved as a signal peptide. The helical transmembrane segment at 244–264 (IMCLSLVGPLTALTFCVGLVM) threads the bilayer. Residues 327–369 (CPICLSEYATKETVRCLPECEHCFHTECIDAWLKLHSSCPVCR) form an RING-type; atypical zinc finger.

Belongs to the RING-type zinc finger family. ATL subfamily.

It localises to the membrane. The enzyme catalyses S-ubiquitinyl-[E2 ubiquitin-conjugating enzyme]-L-cysteine + [acceptor protein]-L-lysine = [E2 ubiquitin-conjugating enzyme]-L-cysteine + N(6)-ubiquitinyl-[acceptor protein]-L-lysine.. Its pathway is protein modification; protein ubiquitination. This Arabidopsis thaliana (Mouse-ear cress) protein is RING-H2 finger protein ATL22 (ATL22).